The sequence spans 165 residues: Neuritin-like protein (165 aa).

An N-terminal signal peptide occupies residues 1–35 (MMRCCRRRCCCRQPPHALRPLLLLPLVLLPPLAAA). A lipid anchor (GPI-anchor amidated alanine) is attached at A139. Positions 140–165 (PALPMAPAPPLLAAALALAYLLRPLA) are cleaved as a propeptide — removed in mature form.

It belongs to the neuritin family.

Its subcellular location is the cell membrane. The protein is Neuritin-like protein (NRN1L) of Homo sapiens (Human).